The chain runs to 489 residues: Corticosteroid-binding protein (489 aa).

It to yeast FMS1.

May be a flavoprotein with enzymatic activity. In Candida albicans (strain SC5314 / ATCC MYA-2876) (Yeast), this protein is Corticosteroid-binding protein (CBP1).